Here is a 97-residue protein sequence, read N- to C-terminus: Na(+)/H(+) antiporter subunit F1 (97 aa).

3 helical membrane-spanning segments follow: residues 3–23 (HNVI…AMLI), 35–55 (VVAL…FSIL), and 60–80 (YMIV…AVFS).

The protein belongs to the CPA3 antiporters (TC 2.A.63) subunit F family. May form a heterooligomeric complex that consists of seven subunits: mnhA1, mnhB1, mnhC1, mnhD1, mnhE1, mnhF1 and mnhG1.

Its subcellular location is the cell membrane. Functionally, mnh complex is a Na(+)/H(+) antiporter involved in Na(+) excretion. The polypeptide is Na(+)/H(+) antiporter subunit F1 (mnhF1) (Staphylococcus aureus (strain Mu3 / ATCC 700698)).